Reading from the N-terminus, the 44-residue chain is Photosystem I reaction center subunit IX (44 aa).

Residues 7–27 traverse the membrane as a helical segment; it reads YLSVAPVLATLWFGSLAGLLI.

The protein belongs to the PsaJ family.

The protein resides in the plastid. Its subcellular location is the chloroplast thylakoid membrane. Its function is as follows. May help in the organization of the PsaE and PsaF subunits. The chain is Photosystem I reaction center subunit IX from Piper cenocladum (Ant piper).